The following is a 146-amino-acid chain: Neuropeptide Y receptor type 2 (146 aa).

Residues 1–8 are Extracellular-facing; that stretch reads KMGPVLCH. The cysteines at positions 7 and 87 are disulfide-linked. The helical transmembrane segment at 9–29 threads the bilayer; it reads LVPYAQGLAVQVSTITLTVIA. Residues 30–49 are Cytoplasmic-facing; it reads LDRHRCIVYHLESKISKQIS. The helical transmembrane segment at 50 to 70 threads the bilayer; sequence FLIIGLAWGVSALLASPLAIF. At 71–100 the chain is on the extracellular side; it reads REYSLIEIIPDFEIVACTEKWPGEEKGIYG. A helical transmembrane segment spans residues 101-121; it reads TVYSLLSLLILYVLPLGIISF. At 122 to 146 the chain is on the cytoplasmic side; sequence SYARIWSKLKNHVSPGAAHDHYHQR.

This sequence belongs to the G-protein coupled receptor 1 family.

The protein localises to the cell membrane. Receptor for neuropeptide Y and peptide YY. This is Neuropeptide Y receptor type 2 (NPY2R) from Ovis aries (Sheep).